A 340-amino-acid chain; its full sequence is HPr kinase/phosphorylase (340 aa).

Active-site residues include histidine 153 and lysine 174. 168 to 175 contributes to the ATP binding site; that stretch reads GRSGIGKS. A Mg(2+)-binding site is contributed by serine 175. Aspartate 192 acts as the Proton acceptor; for phosphorylation activity. Proton donor; for dephosphorylation activity in catalysis. Residues 216–225 are important for the catalytic mechanism of both phosphorylation and dephosphorylation; that stretch reads MEIRGLGIID. Glutamate 217 lines the Mg(2+) pocket. Arginine 258 is an active-site residue. An important for the catalytic mechanism of dephosphorylation region spans residues 279–284; it reads PIYPGK.

It belongs to the HPrK/P family. Homohexamer. Mg(2+) serves as cofactor.

It carries out the reaction [HPr protein]-L-serine + ATP = [HPr protein]-O-phospho-L-serine + ADP + H(+). It catalyses the reaction [HPr protein]-O-phospho-L-serine + phosphate + H(+) = [HPr protein]-L-serine + diphosphate. In terms of biological role, catalyzes the ATP- as well as the pyrophosphate-dependent phosphorylation of a specific serine residue in HPr, a phosphocarrier protein of the phosphoenolpyruvate-dependent sugar phosphotransferase system (PTS). HprK/P also catalyzes the pyrophosphate-producing, inorganic phosphate-dependent dephosphorylation (phosphorolysis) of seryl-phosphorylated HPr (P-Ser-HPr). This is HPr kinase/phosphorylase from Chloroherpeton thalassium (strain ATCC 35110 / GB-78).